Here is a 146-residue protein sequence, read N- to C-terminus: Hemoglobin cathodic subunit beta (146 aa).

The region spanning 2–146 (HFSDAERDAI…VAAALSSRYF (145 aa)) is the Globin domain. Residues His-63 and His-92 each contribute to the heme b site.

The protein belongs to the globin family. As to quaternary structure, heterotetramer of two alpha chains and two beta chains. Red blood cells.

Involved in oxygen transport from gills to the various peripheral tissues. The protein is Hemoglobin cathodic subunit beta (hbb) of Hoplosternum littorale (Hassar).